The primary structure comprises 197 residues: Ion-translocating oxidoreductase complex subunit B (197 aa).

The tract at residues 1-26 (MSTILIAIIALAVLAAVFGAILGFAS) is hydrophobic. Residues 32-90 (EADPIVDQIDTILPQTQCGQCGYPGCRPYAEAIANGDKINKCPPGGQATIEKLADLMGV) enclose the 4Fe-4S domain. Residues Cys49, Cys52, Cys57, Cys73, Cys114, Cys117, Cys120, Cys124, Cys144, Cys147, Cys150, and Cys154 each contribute to the [4Fe-4S] cluster site. 4Fe-4S ferredoxin-type domains are found at residues 105 to 134 (TVAF…GGTK) and 135 to 164 (ALHT…MIPV).

It belongs to the 4Fe4S bacterial-type ferredoxin family. RnfB subfamily. As to quaternary structure, the complex is composed of six subunits: RnfA, RnfB, RnfC, RnfD, RnfE and RnfG. [4Fe-4S] cluster serves as cofactor.

Its subcellular location is the cell inner membrane. Functionally, part of a membrane-bound complex that couples electron transfer with translocation of ions across the membrane. The sequence is that of Ion-translocating oxidoreductase complex subunit B from Vibrio atlanticus (strain LGP32) (Vibrio splendidus (strain Mel32)).